A 102-amino-acid polypeptide reads, in one-letter code: ATP-dependent Clp protease adapter protein ClpS (102 aa).

The protein belongs to the ClpS family. In terms of assembly, binds to the N-terminal domain of the chaperone ClpA.

Its function is as follows. Involved in the modulation of the specificity of the ClpAP-mediated ATP-dependent protein degradation. In Shewanella woodyi (strain ATCC 51908 / MS32), this protein is ATP-dependent Clp protease adapter protein ClpS.